Reading from the N-terminus, the 67-residue chain is Large ribosomal subunit protein bL35 (67 aa).

It belongs to the bacterial ribosomal protein bL35 family.

This is Large ribosomal subunit protein bL35 from Rhizobium etli (strain ATCC 51251 / DSM 11541 / JCM 21823 / NBRC 15573 / CFN 42).